The chain runs to 638 residues: Guanylate-binding protein 7 (638 aa).

The tract at residues methionine 1–cysteine 310 is GTPase domain (Globular). Positions threonine 35 to lysine 277 constitute a GB1/RHD3-type G domain. Residues glycine 45–serine 52, leucine 67–cysteine 69, and aspartate 97–leucine 101 each bind GTP. Positions leucine 311–serine 638 are interaction with the CYBA-CYBB complex. Residues proline 590–serine 638 form a C-terminal tail; required for its localization to cytoplasmic vesicle region.

It belongs to the TRAFAC class dynamin-like GTPase superfamily. GB1/RHD3 GTPase family. GB1 subfamily. As to quaternary structure, monomer and dimer. Interacts with CYBA, CYBA-CYBB complex and ATG4B. Interacts (via GB1/RHD3-type G domain) with NCF2 and NCF2-NCF4 complex.

It is found in the cytoplasmic vesicle membrane. The enzyme catalyses GTP + H2O = GDP + phosphate + H(+). It carries out the reaction GDP + H2O = GMP + phosphate + H(+). Interferon (IFN)-inducible GTPase that plays important roles in innate immunity against a diverse range of bacterial, viral and protozoan pathogens. Hydrolyzes GTP to GMP in two consecutive cleavage reactions and predominantly uses GTP and not GDP or GMP as the substrate. Following infection, recruited to the pathogen-containing vacuoles or vacuole-escaped bacteria and acts as a positive regulator of inflammasome assembly by promoting the release of inflammasome ligands from bacteria. Acts by promoting lysis of pathogen-containing vacuoles, releasing pathogens into the cytosol. Following pathogen release in the cytosol, promotes recruitment of proteins that mediate bacterial cytolysis: this liberates ligands that are detected by inflammasomes, such as lipopolysaccharide (LPS) that activates the non-canonical CASP4/CASP11 inflammasome or double-stranded DNA (dsDNA) that activates the AIM2 inflammasome. Also promotes IFN-gamma-mediated host defense against bacterial infections by regulating oxidative responses and bacteriolytic peptide generation. May help to assemble NADPH oxidase on phagosomal membranes by acting as a bridging protein between NADPH oxidase cytosolic subunits NCF2-NCF4 and the membrane subunits CYBA-CYBB. Participates along with GBP1 in trafficking monoubiquinated protein cargo to autolysosomes for generating ubiquitin-derived antimicrobial peptides. Facilitates influenza A virus replication by inhibiting the activation of NF-kappaB and JAK-STAT signaling pathways and the expression of type I, type III interferons and pro-inflammatory cytokines. Confers protection to several pathogens, including the bacterial pathogens Listeria monocytogenes and Mycobacterium bovis BCG as well as the protozoan pathogen Toxoplasma gondii. Required for disruption of the parasitophorous vacuole formed following T.gondii infection and subsequent killing of the parasite. The polypeptide is Guanylate-binding protein 7 (GBP7) (Homo sapiens (Human)).